We begin with the raw amino-acid sequence, 598 residues long: Aspartate--tRNA(Asp/Asn) ligase (598 aa).

Glutamate 172 is a binding site for L-aspartate. The interval 196–199 is aspartate; it reads QLFK. Position 218 (arginine 218) interacts with L-aspartate. ATP-binding positions include 218 to 220 and glutamine 227; that span reads RDE. Histidine 454 is an L-aspartate binding site. Glutamate 488 is a binding site for ATP. L-aspartate is bound at residue arginine 495. An ATP-binding site is contributed by 540-543; that stretch reads GLDR.

Belongs to the class-II aminoacyl-tRNA synthetase family. Type 1 subfamily. Homodimer.

The protein localises to the cytoplasm. The enzyme catalyses tRNA(Asx) + L-aspartate + ATP = L-aspartyl-tRNA(Asx) + AMP + diphosphate. Its function is as follows. Aspartyl-tRNA synthetase with relaxed tRNA specificity since it is able to aspartylate not only its cognate tRNA(Asp) but also tRNA(Asn). Reaction proceeds in two steps: L-aspartate is first activated by ATP to form Asp-AMP and then transferred to the acceptor end of tRNA(Asp/Asn). In Leptothrix cholodnii (strain ATCC 51168 / LMG 8142 / SP-6) (Leptothrix discophora (strain SP-6)), this protein is Aspartate--tRNA(Asp/Asn) ligase.